A 1192-amino-acid polypeptide reads, in one-letter code: Protein WWC2 (1192 aa).

2 consecutive WW domains span residues 10 to 43 (LPLP…DPRD) and 57 to 90 (DELP…DPRK). 2 coiled-coil regions span residues 121–194 (KEQR…YKEQ) and 224–256 (ELKS…FHLD). Position 286 is a phosphoserine (S286). A coiled-coil region spans residues 302–421 (LAEKVRLSLQ…KLEETTKLTT (120 aa)). Positions 441 to 462 (SSLGSLASSRGSLNTSSRGSLN) are disordered. The region spanning 698–821 (ETAQVQIGLR…FSSEVFTLWY (124 aa)) is the C2 domain. The stretch at 859–887 (ALLARTSAELLAVEQELAQEEEEESGQEE) forms a coiled coil. 2 disordered regions span residues 873 to 895 (QELA…DGDW) and 911 to 991 (EAEV…SRQH). The segment covering 875 to 885 (LAQEEEEESGQ) has biased composition (acidic residues). A compositionally biased stretch (polar residues) spans 923-933 (TEDLSSCTSVP). The span at 938-951 (DGNRKESNCAKDLR) shows a compositional bias: basic and acidic residues. T1004 is modified (phosphothreonine). S1022 carries the phosphoserine modification. Residues 1031-1050 (SLFVRNSTERRSLRVKRTVC) are interaction with PRKCZ. Residues 1068–1144 (DLELDLQASL…EQKQGLNAEK (77 aa)) are a coiled coil. Basic and acidic residues predominate over residues 1124–1137 (QAEKQAEQSKEEQK). A disordered region spans residues 1124–1143 (QAEKQAEQSKEEQKQGLNAE).

It belongs to the WWC family. Forms homodimers and heterodimers with WWC1 and WWC3. Interacts with DLC1 and PRKCZ. Interacts (via WW domains) with LATS1 and LATS2.

It is found in the cytoplasm. The protein localises to the cytosol. In terms of biological role, regulator of the Hippo signaling pathway, also known as the Salvador-Warts-Hippo (SWH) pathway. Enhances phosphorylation of LATS1 and YAP1 and negatively regulates cell proliferation and organ growth due to a suppression of the transcriptional activity of YAP1, the major effector of the Hippo pathway. In Homo sapiens (Human), this protein is Protein WWC2.